A 101-amino-acid chain; its full sequence is Large ribosomal subunit protein eL30 (101 aa).

It belongs to the eukaryotic ribosomal protein eL30 family.

The protein is Large ribosomal subunit protein eL30 of Pyrobaculum neutrophilum (strain DSM 2338 / JCM 9278 / NBRC 100436 / V24Sta) (Thermoproteus neutrophilus).